We begin with the raw amino-acid sequence, 345 residues long: MARLEDPTALTQLPDESARVRYTSSELQDYFETLKFPQRFLDLGNSVLKDPSLARTKENGLPLLQAITRYHTCNVPFENLVLHYDPHKIVTLDPAELYTKIVTRRRGGRCMENNIFLGTALRSLGYEVRNCGGRVSRAMSPYPEVRKNQSATYDGWNHMLLLVFLGDEWYGVDVGMGSMGPNLPFPLQDGFESLSIAPREIRIQKRSISETHATGPSHATKMWCYDVCYNPAESKKTWTPVYCFTETEFLPQDYEVMSWFTSTNPRSFFTRYITCTKMIMDEDKEVIIGNLTLFKDTVRETIGSDRKVVKKFETEEERIKGLVEIFDVNLTEEEKNSLPQEKRLA.

Cysteine 110 functions as the Acyl-thioester intermediate in the catalytic mechanism. Histidine 158 serves as the catalytic Proton acceptor. Aspartate 173 is a catalytic residue.

The protein belongs to the arylamine N-acetyltransferase family.

The protein operates within xenobiotic degradation. N-malonyltransferase; part of the Fusarium detoxification of benzoxazolinone cluster 2 (FDB2) involved in the degradation of benzoxazolinones produced by the host plant. Maize, wheat, and rye produce the 2 benzoxazinone phytoanticipins 2,4-dihy-droxy-7-methoxy-1,4-benzoxazin-3-one (DIMBOA) and 2,4-dihydroxy-1,4-benzoxazin-3-one (DIBOA) that, due to their inherent instability once released, spontaneously degrade to the more stable corresponding benzoxazolinones, 6-methoxy-2-benzoxazolinone (MBOA) and 2-benzoxazolinone (BOA), respectively. The first step in the detoxification of benzoxazolinones involves the hydrolysis of the cyclic ester bond of benzoxazolinones by the FDB1 cluster gamma-lactamase MBL1 to aminophenols. MBL1 is able to convert BOA into 2-aminophenol (2-AP), as well as MBOA into 5-methoxy-2-aminophenol (2-AMP). The FDB2 cluster N-malonyltransferase FDB2/NAT1 then metabolizes aminophenols via N-malonylation to non-toxic malonamic acids. FDB2/NAT1 converts 2-AP into N-(2-hydroxyphenyl) malonamic acid (HPMA) and 2-AMP into N-(2-hydroxy-4-methoxyphenyl) malonamic acid (HMPMA). The duplicated dienlactone hydrolases DLH1 and DLH2 may provide redundant function for hydrolyzing the lactone moiety in the BOA molecule. The roles of the amidases an other enzymes encoded by the 2 FDB clusters have not been identified so far. This Gibberella moniliformis (strain M3125 / FGSC 7600) (Maize ear and stalk rot fungus) protein is N-malonyltransferase FDB2.